Reading from the N-terminus, the 443-residue chain is Thymidine phosphorylase (443 aa).

It belongs to the thymidine/pyrimidine-nucleoside phosphorylase family. In terms of assembly, homodimer.

It carries out the reaction thymidine + phosphate = 2-deoxy-alpha-D-ribose 1-phosphate + thymine. It participates in pyrimidine metabolism; dTMP biosynthesis via salvage pathway; dTMP from thymine: step 1/2. Its function is as follows. The enzymes which catalyze the reversible phosphorolysis of pyrimidine nucleosides are involved in the degradation of these compounds and in their utilization as carbon and energy sources, or in the rescue of pyrimidine bases for nucleotide synthesis. This is Thymidine phosphorylase from Shewanella baltica (strain OS185).